A 130-amino-acid polypeptide reads, in one-letter code: Small ribosomal subunit protein uS9 (130 aa).

Belongs to the universal ribosomal protein uS9 family.

The sequence is that of Small ribosomal subunit protein uS9 from Streptococcus mutans serotype c (strain ATCC 700610 / UA159).